The primary structure comprises 492 residues: NADPH:adrenodoxin oxidoreductase, mitochondrial (492 aa).

The transit peptide at 1-32 (MAPRCWRWWPWSSWTRTRLPPSRSIQNFGQHF) directs the protein to the mitochondrion. Residues alanine 49, glutamate 70, leucine 78, and valine 114 each contribute to the FAD site. NADP(+) contacts are provided by residues 185-188 (QGNV), 229-230 (RR), and glutamate 241. 2 positions are modified to phosphoserine: serine 311 and serine 318. Residues tryptophan 399 and 406–408 (GVI) each bind FAD. Glycine 406 is a binding site for NADP(+).

This sequence belongs to the ferredoxin--NADP reductase type 1 family. As to quaternary structure, monomer. Interacts directly with FDX1. FAD serves as cofactor. As to expression, detected in adrenal cortex and corpus luteum (at protein level).

Its subcellular location is the mitochondrion inner membrane. The catalysed reaction is 2 reduced [adrenodoxin] + NADP(+) + H(+) = 2 oxidized [adrenodoxin] + NADPH. It catalyses the reaction 2 reduced [2Fe-2S]-[ferredoxin] + NADP(+) + H(+) = 2 oxidized [2Fe-2S]-[ferredoxin] + NADPH. Its pathway is steroid metabolism; cholesterol metabolism. In terms of biological role, serves as the first electron transfer protein in all the mitochondrial P450 systems including cholesterol side chain cleavage in all steroidogenic tissues, steroid 11-beta hydroxylation in the adrenal cortex, 25-OH-vitamin D3-24 hydroxylation in the kidney, and sterol C-27 hydroxylation in the liver. Also acts as a ferredoxin--NADP(+) reductase essential for coenzyme Q biosynthesis: together with FDX2, transfers the electrons required for the hydroxylation reaction performed by COQ6. The chain is NADPH:adrenodoxin oxidoreductase, mitochondrial (FDXR) from Bos taurus (Bovine).